Here is a 402-residue protein sequence, read N- to C-terminus: S-adenosylmethionine synthase (402 aa).

137 to 142 contacts ATP; that stretch reads GQGSAD.

This sequence belongs to the AdoMet synthase 2 family. Requires Mg(2+) as cofactor.

It catalyses the reaction L-methionine + ATP + H2O = S-adenosyl-L-methionine + phosphate + diphosphate. It participates in amino-acid biosynthesis; S-adenosyl-L-methionine biosynthesis; S-adenosyl-L-methionine from L-methionine: step 1/1. In terms of biological role, catalyzes the formation of S-adenosylmethionine from methionine and ATP. The chain is S-adenosylmethionine synthase from Pyrobaculum calidifontis (strain DSM 21063 / JCM 11548 / VA1).